Reading from the N-terminus, the 255-residue chain is Hydroxyacylglutathione hydrolase (255 aa).

H56, H58, D60, H61, H114, D133, and H171 together coordinate Zn(2+).

It belongs to the metallo-beta-lactamase superfamily. Glyoxalase II family. As to quaternary structure, monomer. Requires Zn(2+) as cofactor.

It catalyses the reaction an S-(2-hydroxyacyl)glutathione + H2O = a 2-hydroxy carboxylate + glutathione + H(+). It functions in the pathway secondary metabolite metabolism; methylglyoxal degradation; (R)-lactate from methylglyoxal: step 2/2. Thiolesterase that catalyzes the hydrolysis of S-D-lactoyl-glutathione to form glutathione and D-lactic acid. This is Hydroxyacylglutathione hydrolase from Rhodopseudomonas palustris (strain BisB5).